The chain runs to 702 residues: Cytolytic toxin-beta (702 aa).

A structural MACPF/CDC pore-forming domain region spans residues 2-264 (PSDILVVAAL…EAPQLMADSS (263 aa)). N-linked (GlcNAc...) asparagine glycans are attached at residues asparagine 94, asparagine 101, and asparagine 286. The interval 265-387 (TPILRKVRNT…DIIEEAKHKV (123 aa)) is structural FAT domain. Residues 388–515 (VLSKSQMARE…PRIPPVETIQ (128 aa)) are thioredoxin (THX) domain. The region spanning 504-702 (SNPRIPPVET…ANGQIKLKGE (199 aa)) is the B30.2/SPRY domain.

The protein belongs to the SNTX/VTX toxin family. As to quaternary structure, heterodimer of alpha and beta subunits; non-covalently linked. Also associates into tetramers or even higher aggregates. In terms of processing, intrachain disulfide bonds may be present in the heterodimer. Expressed by the venom gland.

It localises to the secreted. Its function is as follows. This heterodimer induces potent hemolytic activities (when tested on rabbit erythrocytes, EC(50)=25-56 ng/mL) due to its ability to form pores in the cell membrane. The pore may be composed of 10 alpha/beta heterodimers. The toxin shows cardiovascular effects that include a vasorelaxant action that may involve the L-arginine-nitric oxid synthase pathway. In addition, it displays edema-inducing activities, increases vascular permeability. It also shows myotoxic activities and interferes irreversibly with neuromuscular function. It also induces irreversible platelet aggregation in rabbit or rat (but not in human or mouse) whole blood. In addition, it has been observed to increase spontaneous quantal acetylcholine release from isolated frog cutaneous pectoris motor endings. This chain is Cytolytic toxin-beta, found in Scorpaena plumieri (Spotted scorpionfish).